An 817-amino-acid chain; its full sequence is Exocyst complex component 6 (817 aa).

Coiled coils occupy residues 87 to 149 and 247 to 270; these read QSFV…DQIA and TDAE…EIEV.

The protein belongs to the SEC15 family. In terms of assembly, the exocyst complex is composed of sec-3/exoc1, sec-5/exoc2, sec-6/exoc3, sec-8/exoc4, sec-10/exoc5, sec-15/exoc6, exo-70/exoc7 and exo-84/exoc8.

Functionally, component of the exocyst complex involved in the docking of exocytic vesicles with fusion sites on the plasma membrane. The polypeptide is Exocyst complex component 6 (sec-15) (Caenorhabditis elegans).